The primary structure comprises 71 residues: Large ribosomal subunit protein uL29 (71 aa).

Belongs to the universal ribosomal protein uL29 family.

The polypeptide is Large ribosomal subunit protein uL29 (Synechococcus sp. (strain RCC307)).